The following is a 619-amino-acid chain: Chaperone protein HscA homolog (619 aa).

This sequence belongs to the heat shock protein 70 family.

Chaperone involved in the maturation of iron-sulfur cluster-containing proteins. Has a low intrinsic ATPase activity which is markedly stimulated by HscB. The polypeptide is Chaperone protein HscA homolog (Pseudomonas aeruginosa (strain UCBPP-PA14)).